A 148-amino-acid polypeptide reads, in one-letter code: Large ribosomal subunit protein bL9 (148 aa).

This sequence belongs to the bacterial ribosomal protein bL9 family.

Functionally, binds to the 23S rRNA. The chain is Large ribosomal subunit protein bL9 from Syntrophotalea carbinolica (strain DSM 2380 / NBRC 103641 / GraBd1) (Pelobacter carbinolicus).